We begin with the raw amino-acid sequence, 577 residues long: Signal peptide peptidase-like 2B (577 aa).

Residues 1-19 form the signal peptide; the sequence is MAAARLAASLLLLAAQVAC. Over 20–168 the chain is Lumenal; it reads EFGVLRVVPQ…APSEPVMDYN (149 aa). One can recognise a PA domain in the interval 49–149; the sequence is LPHDLNKVSL…RDLQDIFRRF (101 aa). N-linked (GlcNAc...) asparagine glycosylation occurs at Asn-91. Residues 169 to 189 form a helical membrane-spanning segment; sequence MVIIFIMAVGTVALGGYWAGS. Residues 190–216 lie on the Cytoplasmic side of the membrane; that stretch reads HDVKKYMKHKRDDVPEKQEDEAVDVTP. Residues 217–237 traverse the membrane as a helical segment; it reads VMICVFVVMCCFMLVLLYYFY. The Lumenal portion of the chain corresponds to 238 to 239; the sequence is DR. The helical transmembrane segment at 240–260 threads the bilayer; sequence LVYVIIGIFCLASSTGLYSCL. Over 261–286 the chain is Cytoplasmic; it reads APCVRKLPFCTCRVPDNNLPYFHKRP. Residues 287–307 traverse the membrane as a helical segment; the sequence is QARMLLLALFCVTVSVVWGVF. Topologically, residues 308–312 are lumenal; that stretch reads RNEDQ. Residues 313–333 traverse the membrane as a helical segment; sequence WAWVLQDTLGIAFCLYMLRTI. The Cytoplasmic segment spans residues 334-341; that stretch reads RLPTFKAC. Residues 342–362 form a helical membrane-spanning segment; the sequence is TLLLLVLFVYDIFFVFITPYL. Asp-352 is a catalytic residue. At 363–405 the chain is on the lumenal side; sequence TKSGNSIMVEVATGPSNSSTHEKLPMVLKVPRLNTSPLSLCDR. Residues 406–426 form a helical membrane-spanning segment; sequence PFSLLGFGDILVPGLLVAYCH. The active site involves Asp-414. Topologically, residues 427 to 438 are cytoplasmic; it reads RFDIQVQSSRIY. The chain crosses the membrane as a helical span at residues 439–459; it reads FVACTIAYGLGLLVTFVALVL. At 460–463 the chain is on the lumenal side; it reads MRHG. A helical membrane pass occupies residues 464–484; that stretch reads QPALLYLVPCTLLTSCTVALW. Residues 465–467 carry the PAL motif; it reads PAL. Topologically, residues 485 to 577 are cytoplasmic; that stretch reads RREMGAFWTG…IPVVTPGTSA (93 aa). The tract at residues 502-577 is disordered; that stretch reads QTPWAAPQGP…IPVVTPGTSA (76 aa).

This sequence belongs to the peptidase A22B family. As to quaternary structure, monomer. Homodimer. Interacts with ITM2B and TNF. In terms of processing, glycosylated.

It localises to the cell membrane. The protein localises to the golgi apparatus membrane. The protein resides in the lysosome membrane. Its subcellular location is the endosome membrane. It is found in the membrane. Its function is as follows. Intramembrane-cleaving aspartic protease (I-CLiP) that cleaves type II membrane signal peptides in the hydrophobic plane of the membrane. Functions in ITM2B and TNF processing. Catalyzes the intramembrane cleavage of the anchored fragment of shed TNF-alpha (TNF), which promotes the release of the intracellular domain (ICD) for signaling to the nucleus. May play a role in the regulation of innate and adaptive immunity. This is Signal peptide peptidase-like 2B from Rattus norvegicus (Rat).